A 235-amino-acid polypeptide reads, in one-letter code: MAKLTKRQKALEGKVDSLKLYAIDDAFKIVRDCATAKFDESIDVSVQLGIDAKKSDQVVRGAVVLPNGTGKTKRVAVFAQGAKAEEAKAAGADVVGMEDLAEQVKAGNLNFDVVIASPDTMRIVGTLGQILGPRGLMPNPKVGTVTPDVATAVKNAKAGQVQFRVDKAGIIHTTLGRRSFDGDKLKGNLQALIEALNKAKPATSKGIYLRKVAVSSTMGVGVRVDVASINAAAQG.

It belongs to the universal ribosomal protein uL1 family. In terms of assembly, part of the 50S ribosomal subunit.

Binds directly to 23S rRNA. The L1 stalk is quite mobile in the ribosome, and is involved in E site tRNA release. In terms of biological role, protein L1 is also a translational repressor protein, it controls the translation of the L11 operon by binding to its mRNA. The protein is Large ribosomal subunit protein uL1 of Methylibium petroleiphilum (strain ATCC BAA-1232 / LMG 22953 / PM1).